The primary structure comprises 387 residues: RNA polymerase II elongation factor ELL3 (387 aa).

2 disordered regions span residues 127–148 (LTEG…EGHP) and 186–275 (LSNR…EEVP). Polar residues predominate over residues 230–239 (SPLQGLSNQD). Residue Ser240 is modified to Phosphoserine. Positions 240–251 (SPEEQDWGQDAD) are enriched in acidic residues. Residues 257–271 (EQSLSVQSASESPSP) are compositionally biased toward low complexity. Positions 275 to 385 (PDYLLQYSTI…LILEFEEKNR (111 aa)) constitute an OCEL domain.

This sequence belongs to the ELL/occludin family. As to quaternary structure, interacts with AFF4. Component of the super elongation complex (SEC), at least composed of EAF1, EAF2, CDK9, MLLT3/AF9, AFF (AFF1 or AFF4), the P-TEFb complex and ELL (ELL, ELL2 or ELL3). Component of the little elongation complex (LEC), at least composed of ELL (ELL, ELL2 or ELL3), ZC3H8, ICE1 and ICE2.

The protein localises to the nucleus. Its function is as follows. Enhancer-binding elongation factor that specifically binds enhancers in embryonic stem cells (ES cells), marks them, and is required for their future activation during stem cell specification. Elongation factor component of the super elongation complex (SEC), a complex required to increase the catalytic rate of RNA polymerase II transcription by suppressing transient pausing by the polymerase at multiple sites along the DNA. Component of the little elongation complex (LEC), a complex required to regulate small nuclear RNA (snRNA) gene transcription by RNA polymerase II and III. Does not only bind to enhancer regions of active genes, but also marks the enhancers that are in a poised or inactive state in ES cells and is required for establishing proper RNA polymerase II occupancy at developmentally regulated genes in a cohesin-dependent manner. Probably required for priming developmentally regulated genes for later recruitment of the super elongation complex (SEC), for transcriptional activation during differentiation. Required for recruitment of P-TEFb within SEC during differentiation. Probably preloaded on germ cell chromatin, suggesting that it may prime gene activation by marking enhancers as early as in the germ cells. Promoting epithelial-mesenchymal transition (EMT). The chain is RNA polymerase II elongation factor ELL3 (Ell3) from Rattus norvegicus (Rat).